The sequence spans 201 residues: Phospholipase D (201 aa).

An N-terminal signal peptide occupies residues 1–25; it reads MKRKNKKFTEIFIAFILGIAIGVLG. The region spanning 142 to 169 is the PLD phosphodiesterase domain; it reads VPGIAHNKVIIIDKKKVITGSFNFTAAA. Catalysis depends on residues His147, Lys149, and Asp154.

Belongs to the phospholipase D family. Homodimer.

The protein localises to the secreted. The enzyme catalyses a 1,2-diacyl-sn-glycero-3-phosphocholine + H2O = a 1,2-diacyl-sn-glycero-3-phosphate + choline + H(+). Could be a virulence factor. The sequence is that of Phospholipase D (pld) from Rickettsia bellii (strain RML369-C).